Here is a 188-residue protein sequence, read N- to C-terminus: Elongation factor P (188 aa).

Position 34 is an N6-(3,6-diaminohexanoyl)-5-hydroxylysine (lysine 34).

The protein belongs to the elongation factor P family. May be beta-lysylated on the epsilon-amino group of Lys-34 by the combined action of EpmA and EpmB, and then hydroxylated on the C5 position of the same residue by EpmC (if this protein is present). Lysylation is critical for the stimulatory effect of EF-P on peptide-bond formation. The lysylation moiety may extend toward the peptidyltransferase center and stabilize the terminal 3-CCA end of the tRNA. Hydroxylation of the C5 position on Lys-34 may allow additional potential stabilizing hydrogen-bond interactions with the P-tRNA.

The protein localises to the cytoplasm. Its pathway is protein biosynthesis; polypeptide chain elongation. Its function is as follows. Involved in peptide bond synthesis. Alleviates ribosome stalling that occurs when 3 or more consecutive Pro residues or the sequence PPG is present in a protein, possibly by augmenting the peptidyl transferase activity of the ribosome. Modification of Lys-34 is required for alleviation. The sequence is that of Elongation factor P from Vibrio parahaemolyticus serotype O3:K6 (strain RIMD 2210633).